The primary structure comprises 86 residues: MVKIRLTRGGAKKRPFYQIIVTDSRNKRDGRNIERVGHYNPVAQGAESRVVLNVARVEHWVRNGAQLTDKVRSLLKEVSKTQATAS.

This sequence belongs to the bacterial ribosomal protein bS16 family.

This Xylella fastidiosa (strain M12) protein is Small ribosomal subunit protein bS16.